A 249-amino-acid polypeptide reads, in one-letter code: Secreted flagellin C (249 aa).

Interacts with FliS.

Its subcellular location is the secreted. Might play a role in virulence. The chain is Secreted flagellin C (flaC) from Campylobacter jejuni subsp. jejuni serotype O:6 (strain 81116 / NCTC 11828).